Reading from the N-terminus, the 1368-residue chain is DNA-directed RNA polymerase subunit beta (1368 aa).

The protein belongs to the RNA polymerase beta chain family. As to quaternary structure, the RNAP catalytic core consists of 2 alpha, 1 beta, 1 beta' and 1 omega subunit. When a sigma factor is associated with the core the holoenzyme is formed, which can initiate transcription.

The catalysed reaction is RNA(n) + a ribonucleoside 5'-triphosphate = RNA(n+1) + diphosphate. DNA-dependent RNA polymerase catalyzes the transcription of DNA into RNA using the four ribonucleoside triphosphates as substrates. This chain is DNA-directed RNA polymerase subunit beta, found in Desulfosudis oleivorans (strain DSM 6200 / JCM 39069 / Hxd3) (Desulfococcus oleovorans).